Consider the following 653-residue polypeptide: Acetyl-coenzyme A synthetase (653 aa).

CoA is bound by residues 195 to 198 (RGGK) and Thr-314. Residues 390–392 (GEP), 414–419 (DTWWQT), Asp-505, and Arg-520 contribute to the ATP site. Ser-528 lines the CoA pocket. Arg-531 provides a ligand contact to ATP. Residues Val-542 and Val-547 each coordinate Mg(2+). The residue at position 617 (Lys-617) is an N6-acetyllysine.

This sequence belongs to the ATP-dependent AMP-binding enzyme family. Requires Mg(2+) as cofactor. In terms of processing, acetylated. Deacetylation by the SIR2-homolog deacetylase activates the enzyme.

The catalysed reaction is acetate + ATP + CoA = acetyl-CoA + AMP + diphosphate. Catalyzes the conversion of acetate into acetyl-CoA (AcCoA), an essential intermediate at the junction of anabolic and catabolic pathways. AcsA undergoes a two-step reaction. In the first half reaction, AcsA combines acetate with ATP to form acetyl-adenylate (AcAMP) intermediate. In the second half reaction, it can then transfer the acetyl group from AcAMP to the sulfhydryl group of CoA, forming the product AcCoA. The protein is Acetyl-coenzyme A synthetase of Pasteurella multocida (strain Pm70).